Consider the following 619-residue polypeptide: DEAD-box ATP-dependent RNA helicase 14 (619 aa).

Ala2 is modified (N-acetylalanine). A WW domain is found at 17 to 51 (HTLPKPWKGLIDDRTGYLYFWNPETNVTQYEKPTP). The tract at residues 47-139 (EKPTPSLPPK…APASELSPEA (93 aa)) is disordered. The span at 61 to 71 (VSVSSSVQVQQ) shows a compositional bias: low complexity. A compositionally biased stretch (basic and acidic residues) spans 78–93 (PKDDDKYSRGSERVSR). Low complexity predominate over residues 125-139 (PLPSSAPASELSPEA). Residue Ser136 is modified to Phosphoserine. The Q motif motif lies at 158–186 (MSFEATGFPPELLREVLSAGFSAPTPIQA). Residues 189 to 363 (WPIAMQGRDI…ADLLVNPAQV (175 aa)) form the Helicase ATP-binding domain. An ATP-binding site is contributed by 202-209 (AKTGSGKT). The DEAD box motif lies at 311 to 314 (DEAD). The region spanning 392-536 (RLEQILRSQE…RVPPQIREMA (145 aa)) is the Helicase C-terminal domain. The disordered stretch occupies residues 528-619 (VPPQIREMAT…FHETMMMKHR (92 aa)). The span at 552–568 (PSGGRGRGGDSGYGGRG) shows a compositional bias: gly residues. Basic and acidic residues-rich tracts occupy residues 582 to 595 (GRER…ERFN) and 609 to 619 (SFHETMMMKHR).

It belongs to the DEAD box helicase family. DDX5/DBP2 subfamily. In terms of tissue distribution, ubiquitous. Preferentially expressed in flowers and roots.

It is found in the nucleus. It catalyses the reaction ATP + H2O = ADP + phosphate + H(+). ATP-dependent RNA helicase involved nonsense-mediated mRNA decay and ribosome biogenesis through rRNA processing. The polypeptide is DEAD-box ATP-dependent RNA helicase 14 (RH14) (Arabidopsis thaliana (Mouse-ear cress)).